Consider the following 299-residue polypeptide: Acidic endochitinase Pun g 14, amyloplastic (299 aa).

The N-terminal 26 residues, 1–26 (MAKTLPFSRALLLSLSILLVARAISA), are a transit peptide targeting the amyloplast. The 273-residue stretch at 27–299 (GDIAIYWGQN…TYSTTIKDQV (273 aa)) folds into the GH18 domain. Intrachain disulfides connect Cys46–Cys93 and Cys76–Cys83. The active-site Proton donor is Glu153. Cys185 and Cys216 are disulfide-bonded.

It belongs to the glycosyl hydrolase 18 family. Chitinase class III subfamily. As to quaternary structure, monomer. As to expression, highly expressed in seeds and to a lesser extent in the skin of the pomegranate fruit (at protein level). Not expressed in leaves or flesh of the fruit (at protein level).

The protein resides in the plastid. It is found in the amyloplast. The enzyme catalyses Random endo-hydrolysis of N-acetyl-beta-D-glucosaminide (1-&gt;4)-beta-linkages in chitin and chitodextrins.. Activity is not affected by addition of 10 mM Ca(2+) or removal of Ca(2+). Its function is as follows. Hydrolyzes chitin. Probable calcium storage protein of the seeds. Binds calcium ions with high capacity and low affinity. Involved in seed germination. The polypeptide is Acidic endochitinase Pun g 14, amyloplastic (Punica granatum (Pomegranate)).